The chain runs to 263 residues: TPR repeat-containing protein DDB_G0285095 (263 aa).

A compositionally biased stretch (basic and acidic residues) spans 1–25 (MGCCGSKEKYNGEDVPKSQRLENRP). Positions 1–62 (MGCCGSKEKY…ASASQQNNPT (62 aa)) are disordered. TPR repeat units lie at residues 87–120 (SDLL…DTDN), 121–154 (SRAW…AAPK), and 162–195 (SSLL…GARS).

The chain is TPR repeat-containing protein DDB_G0285095 from Dictyostelium discoideum (Social amoeba).